The sequence spans 822 residues: ATP-dependent zinc metalloprotease FTSH 8, mitochondrial (822 aa).

Positions 1-25 (MSLASLARALSRRSAPSSSRARQGF) are enriched in low complexity. Disordered regions lie at residues 1–50 (MSLA…LHGG), 103–131 (NYYPKGKKEAPKGDGSNKSDSKQDSSTDD), and 202–221 (SSPQSNSQGQNTDAIITTND). Residues 1 to 93 (MSLASLARAL…LANPQFRRLF (93 aa)) constitute a mitochondrion transit peptide. Positions 108 to 127 (GKKEAPKGDGSNKSDSKQDS) are enriched in basic and acidic residues. 375 to 382 (GPPGTGKT) serves as a coordination point for ATP. His600 contacts Zn(2+). Residue Glu601 is part of the active site. Zn(2+) is bound by residues His604 and Asp676. The disordered stretch occupies residues 781–822 (PTNYDLFKQGFQDEEDSKNQEAAKTPQPDDDGTPSLGEVVPT).

It in the N-terminal section; belongs to the AAA ATPase family. The protein in the C-terminal section; belongs to the peptidase M41 family. Requires Zn(2+) as cofactor.

The protein resides in the mitochondrion. Its function is as follows. Probable ATP-dependent zinc metallopeptidase. In Oryza sativa subsp. japonica (Rice), this protein is ATP-dependent zinc metalloprotease FTSH 8, mitochondrial (FTSH8).